Consider the following 308-residue polypeptide: Glutaminase (308 aa).

7 residues coordinate substrate: S66, N117, E162, N169, Y193, Y244, and V262.

Belongs to the glutaminase family. Homotetramer.

It catalyses the reaction L-glutamine + H2O = L-glutamate + NH4(+). The protein is Glutaminase of Natranaerobius thermophilus (strain ATCC BAA-1301 / DSM 18059 / JW/NM-WN-LF).